The sequence spans 112 residues: uncharacterized protein (112 aa).

Residues 85–105 (IVQLIILFAIIITNPNAIELI) form a helical membrane-spanning segment.

The protein belongs to the M.jannaschii MJ0023/MJ0349/MJ1072/MJ1074/MJ1107/MJECL16 family.

The protein resides in the membrane. This is an uncharacterized protein from Methanocaldococcus jannaschii (strain ATCC 43067 / DSM 2661 / JAL-1 / JCM 10045 / NBRC 100440) (Methanococcus jannaschii).